Here is a 501-residue protein sequence, read N- to C-terminus: NAD(P)H-quinone oxidoreductase chain 4, chloroplastic (501 aa).

14 helical membrane passes run 5–25, 38–58, 88–108, 114–131, 135–155, 168–188, 209–229, 243–263, 273–293, 306–326, 331–351, 387–407, 417–437, and 464–484; these read FPWL…IFFL, TCIC…HFQL, IGPI…AWPV, LFYL…GLFS, LLLF…LLSM, FILY…GMGL, ALEI…SPII, HYST…YGLI, AHSL…IYAA, IACS…SITD, GAIL…FLSG, LALP…GIIT, ILIT…LLSM, and FVSI…DCVF.

It belongs to the complex I subunit 4 family.

It is found in the plastid. The protein localises to the chloroplast thylakoid membrane. The catalysed reaction is a plastoquinone + NADH + (n+1) H(+)(in) = a plastoquinol + NAD(+) + n H(+)(out). The enzyme catalyses a plastoquinone + NADPH + (n+1) H(+)(in) = a plastoquinol + NADP(+) + n H(+)(out). This Dioscorea elephantipes (Elephant's foot yam) protein is NAD(P)H-quinone oxidoreductase chain 4, chloroplastic.